The sequence spans 142 residues: uncharacterized protein (142 aa).

Residues 1–14 are compositionally biased toward basic residues; it reads MKNVSPRRNKHYKS. Residues 1 to 40 are disordered; sequence MKNVSPRRNKHYKSYKPQVPLKKPVLLPQHPPYRNRRKKK. A compositionally biased stretch (low complexity) spans 16-28; sequence KPQVPLKKPVLLP.

This is an uncharacterized protein from Aquifex aeolicus (strain VF5).